Consider the following 408-residue polypeptide: Energy-coupling factor transporter ATP-binding protein EcfA1 (408 aa).

The ABC transporter domain maps to 140 to 374 (IEINHLSFKY…KDFLRNIQLD (235 aa)). 174-181 (GHNGSGKS) lines the ATP pocket.

It belongs to the ABC transporter superfamily. Energy-coupling factor EcfA family. In terms of assembly, forms a stable energy-coupling factor (ECF) transporter complex composed of 2 membrane-embedded substrate-binding proteins (S component), 2 ATP-binding proteins (A component) and 2 transmembrane proteins (T component).

It is found in the cell membrane. ATP-binding (A) component of a common energy-coupling factor (ECF) ABC-transporter complex. Unlike classic ABC transporters this ECF transporter provides the energy necessary to transport a number of different substrates. The sequence is that of Energy-coupling factor transporter ATP-binding protein EcfA1 from Mycoplasma mycoides subsp. mycoides SC (strain CCUG 32753 / NCTC 10114 / PG1).